The following is a 45-amino-acid chain: Photosystem II reaction center protein K (45 aa).

Residues M1–S8 constitute a propeptide that is removed on maturation. Residues I20–A40 form a helical membrane-spanning segment.

It belongs to the PsbK family. In terms of assembly, PSII is composed of 1 copy each of membrane proteins PsbA, PsbB, PsbC, PsbD, PsbE, PsbF, PsbH, PsbI, PsbJ, PsbK, PsbL, PsbM, PsbT, PsbX, PsbY, PsbZ, Psb30/Ycf12, at least 3 peripheral proteins of the oxygen-evolving complex and a large number of cofactors. It forms dimeric complexes.

The protein localises to the plastid. It localises to the chloroplast thylakoid membrane. One of the components of the core complex of photosystem II (PSII). PSII is a light-driven water:plastoquinone oxidoreductase that uses light energy to abstract electrons from H(2)O, generating O(2) and a proton gradient subsequently used for ATP formation. It consists of a core antenna complex that captures photons, and an electron transfer chain that converts photonic excitation into a charge separation. The polypeptide is Photosystem II reaction center protein K (Emiliania huxleyi (Coccolithophore)).